We begin with the raw amino-acid sequence, 150 residues long: Lipoprotein signal peptidase (150 aa).

Helical transmembrane passes span 59–79 (VFVG…RYLP) and 84–101 (LLRL…GNLI). Active-site residues include D111 and D125. A helical membrane pass occupies residues 117-137 (IWPVFNLADMAIVFGVIILCW).

This sequence belongs to the peptidase A8 family.

It is found in the cell membrane. The catalysed reaction is Release of signal peptides from bacterial membrane prolipoproteins. Hydrolyzes -Xaa-Yaa-Zaa-|-(S,diacylglyceryl)Cys-, in which Xaa is hydrophobic (preferably Leu), and Yaa (Ala or Ser) and Zaa (Gly or Ala) have small, neutral side chains.. The protein operates within protein modification; lipoprotein biosynthesis (signal peptide cleavage). In terms of biological role, this protein specifically catalyzes the removal of signal peptides from prolipoproteins. In Moorella thermoacetica (strain ATCC 39073 / JCM 9320), this protein is Lipoprotein signal peptidase.